Reading from the N-terminus, the 154-residue chain is Large ribosomal subunit protein bL17 (154 aa).

Positions 125-154 are disordered; it reads AASQKSSKQDRAKRVQGSKKNVDAVAESAE.

It belongs to the bacterial ribosomal protein bL17 family. In terms of assembly, part of the 50S ribosomal subunit. Contacts protein L32.

This chain is Large ribosomal subunit protein bL17, found in Chlorobium chlorochromatii (strain CaD3).